The chain runs to 479 residues: Ribosomal RNA small subunit methyltransferase F (479 aa).

S-adenosyl-L-methionine contacts are provided by residues 125 to 131 (AAAPGSK), Glu-149, Asp-176, and Asp-194. The active-site Nucleophile is Cys-247.

This sequence belongs to the class I-like SAM-binding methyltransferase superfamily. RsmB/NOP family.

Its subcellular location is the cytoplasm. It catalyses the reaction cytidine(1407) in 16S rRNA + S-adenosyl-L-methionine = 5-methylcytidine(1407) in 16S rRNA + S-adenosyl-L-homocysteine + H(+). Its function is as follows. Specifically methylates the cytosine at position 1407 (m5C1407) of 16S rRNA. In Escherichia coli O6:H1 (strain CFT073 / ATCC 700928 / UPEC), this protein is Ribosomal RNA small subunit methyltransferase F.